Reading from the N-terminus, the 97-residue chain is Large ribosomal subunit protein eL21 (97 aa).

It belongs to the eukaryotic ribosomal protein eL21 family.

This Methanococcoides burtonii (strain DSM 6242 / NBRC 107633 / OCM 468 / ACE-M) protein is Large ribosomal subunit protein eL21.